A 1216-amino-acid chain; its full sequence is Apical endosomal glycoprotein (1216 aa).

Positions 1–22 (MPLSSHLLPALVLFLAGSSGWA) are cleaved as a signal peptide. At 23–1151 (WVPNHCRSPG…SPGNTAAPGS (1129 aa)) the chain is on the extracellular side. Residues 26–53 (NHCRSPGQAVCNFVCDCRDCSDEAQCGY) form the LDL-receptor class A 1; truncated domain. One can recognise an MAM 1 domain in the interval 64–222 (FACDFEQDPC…DDLEFWDCGL (159 aa)). Residue N203 is glycosylated (N-linked (GlcNAc...) asparagine). The 39-residue stretch at 228 to 266 (NCPPGHHHCQNKVCVEPQQLCDGEDNCGDLSDENPLTCG) folds into the LDL-receptor class A 2 domain. Cystine bridges form between C229–C241, C236–C254, and C248–C265. Residues 269-425 (IATDFETGLG…DLILSDHCRP (157 aa)) enclose the MAM 2 domain. Residues 280 to 307 (WNRSEGWSRNHRAGGPERPSWPRRDHSR) are disordered. 2 N-linked (GlcNAc...) asparagine glycosylation sites follow: N281 and N339. Residues 429–455 (VSTLQPLPPGPRAPAPQPLPPSSRLQD) are disordered. Pro residues predominate over residues 434-449 (PLPPGPRAPAPQPLPP). An LDL-receptor class A 3 domain is found at 456–491 (SCKQGHLACGDLCVPPEQLCDFEEQCAGGEDEQACG). Intrachain disulfides connect C457-C468, C464-C481, and C475-C490. MAM domains follow at residues 491-644 (GTTD…DCSP), 654-809 (VSCN…PCWA), 811-969 (NYCS…PCPQ), and 971-1138 (GSCD…HCQQ). Residues N583 and N636 are each glycosylated (N-linked (GlcNAc...) asparagine). N-linked (GlcNAc...) asparagine glycosylation occurs at N835. Residues 1152–1172 (VPAVVGSALLLLMLLVLLGLG) traverse the membrane as a helical segment. The Cytoplasmic segment spans residues 1173-1216 (GRRWLQKKGSCPFQSNTEATAPGFDNILFNADGVTLPASVTSDP).

Its subcellular location is the membrane. Its function is as follows. Probably involved in the sorting and selective transport of receptors and ligands across polarized epithelia. In Homo sapiens (Human), this protein is Apical endosomal glycoprotein.